The following is a 22-amino-acid chain: Cysteine proteinase (22 aa).

The disordered stretch occupies residues 1–22 (GADDSDWRKKGAVNVIXKDQGQ).

This sequence belongs to the peptidase C1 family.

The chain is Cysteine proteinase from Trichomonas vaginalis.